The following is a 339-amino-acid chain: Fructose-1,6-bisphosphatase class 1 (339 aa).

4 residues coordinate Mg(2+): E94, D116, L118, and D119. Substrate is bound by residues 119 to 122, N210, and K276; that span reads DGSS. E282 contacts Mg(2+).

It belongs to the FBPase class 1 family. As to quaternary structure, homotetramer. It depends on Mg(2+) as a cofactor.

It is found in the cytoplasm. It carries out the reaction beta-D-fructose 1,6-bisphosphate + H2O = beta-D-fructose 6-phosphate + phosphate. It participates in carbohydrate biosynthesis; gluconeogenesis. The chain is Fructose-1,6-bisphosphatase class 1 from Burkholderia ambifaria (strain MC40-6).